The sequence spans 443 residues: uncharacterized protein (443 aa).

The tract at residues 1–21 is disordered; that stretch reads MQSVTPPPTQQGKPDPTNSDM. A compositionally biased stretch (polar residues) spans 10-20; it reads QQGKPDPTNSD.

This is an uncharacterized protein from Caenorhabditis elegans.